Consider the following 471-residue polypeptide: UDP-N-acetylmuramoylalanine--D-glutamate ligase (471 aa).

120 to 126 (GSNGKTT) provides a ligand contact to ATP.

It belongs to the MurCDEF family.

Its subcellular location is the cytoplasm. It catalyses the reaction UDP-N-acetyl-alpha-D-muramoyl-L-alanine + D-glutamate + ATP = UDP-N-acetyl-alpha-D-muramoyl-L-alanyl-D-glutamate + ADP + phosphate + H(+). It participates in cell wall biogenesis; peptidoglycan biosynthesis. Functionally, cell wall formation. Catalyzes the addition of glutamate to the nucleotide precursor UDP-N-acetylmuramoyl-L-alanine (UMA). The chain is UDP-N-acetylmuramoylalanine--D-glutamate ligase from Nitrosomonas europaea (strain ATCC 19718 / CIP 103999 / KCTC 2705 / NBRC 14298).